The sequence spans 98 residues: uncharacterized protein (98 aa).

Transmembrane regions (helical) follow at residues Ile2–Trp22 and Ala70–Leu90.

It localises to the cell membrane. This is an uncharacterized protein from Sinorhizobium fredii (strain NBRC 101917 / NGR234).